The primary structure comprises 244 residues: MRGIFFLILILNFIGLIFSVAEDCALSKREDRCGSIFEDLTNCYNSTFKMMLGDCLVTCNACESYTCNNPQPDTTLNCTALAGECNSALFSELMKEKCPATCGKCNRKNANLCSDKSKPDICVNLKTLCNSVEFYDKLSEQCPSTCNRCPHNGTNPENKTGGNGGTGTQECTDLANDCSYNQNRCSVKEYSSLMHRLCPKTCNACNICEDANKMCPIWVPRGFCSKFDHDKVQKSCAKSCNICK.

The signal sequence occupies residues 1–19; that stretch reads MRGIFFLILILNFIGLIFS. N-linked (GlcNAc...) asparagine glycans are attached at residues Asn45 and Asn77. 2 consecutive ShKT domains span residues 67–105 and 113–149; these read CNNP…CGKC and CSDK…CNRC. Disulfide bonds link Cys113–Cys149, Cys122–Cys142, and Cys129–Cys146. N-linked (GlcNAc...) asparagine glycans are attached at residues Asn152 and Asn158. ShKT domains follow at residues 171–205 and 208–243; these read CTDL…CNAC and CEDA…CNIC. Disulfide bonds link Cys171-Cys205, Cys178-Cys198, Cys185-Cys202, Cys208-Cys243, Cys215-Cys236, and Cys224-Cys240.

This is an uncharacterized protein from Caenorhabditis elegans.